Here is a 602-residue protein sequence, read N- to C-terminus: MAEGTDPLDDCGGFLDTEADCLDCDNLEEDLTELFDADTVSSLLDDTDQVQGNSLEPFQHHEATETLKSIEHLKRKYVDSPDKSLGIDNSVNALSPRLQAFSLSGQKKAVKKRLFGTDGDEAASGAESLQVESGFGSQQSVSDTPVTDILNANTARVKHLLLFRQAHSVSFSELTRTFQSDKTMSWDWVGGLADIHVSVLESLQTSLRSHCVYVQYDLNFAETNASSLLLLLRFKAQKCRDGVKALLSQLLGVQDLKVLLEPPKTRSVAVALFWYKRAMVSGVFSYGPMPEWITQQTNVNHQMLQEKPFQLSVMVQWAYDNHLQDESSIAYKYAMLAETDENARAFLASNSQAKYVRDCCNMVRLYLRAEMRQMTMSAWINYRLDGMNDDGDWKVVVHFLRHQRVEFIPFMVKLKAFLRGTPKKNCMVFYGPPNSGKSYFCMSLIRLLAGRVLSFANSRSHFWLQPLADAKLALVDDATSACWDFIDTYLRNALDGNPISVDLKHKAPIEIKCPPLLITTNVDVKSDDRWRYLFSRICVFNFLQELPIRNGTPVYELNDANWKSFFKRFWSTLELSDPEDEGDDGGSQPALRLHTGGTSQSL.

The Nuclear localization signal motif lies at 74–76 (KRK). 3 positions are modified to phosphoserine; by host: Ser80, Ser84, and Ser95. The interval 138 to 306 (QQSVSDTPVT…TNVNHQMLQE (169 aa)) is DNA-binding region. The region spanning 405 to 555 (VEFIPFMVKL…LPIRNGTPVY (151 aa)) is the SF3 helicase domain. 431–438 (GPPNSGKS) contributes to the ATP binding site. A Glycyl lysine isopeptide (Lys-Gly) (interchain with G-Cter in SUMO) cross-link involves residue Lys512. The segment at 577–602 (DPEDEGDDGGSQPALRLHTGGTSQSL) is disordered.

It belongs to the papillomaviridae E1 protein family. In terms of assembly, can form hexamers. Interacts with E2 protein; this interaction increases E1 DNA binding specificity. Interacts with host DNA polymerase subunit POLA2. Interacts with host single stranded DNA-binding protein RPA1. Interacts with host TOP1; this interaction stimulates the enzymatic activity of TOP1. In terms of processing, phosphorylated. Post-translationally, sumoylated.

It localises to the host nucleus. The enzyme catalyses Couples ATP hydrolysis with the unwinding of duplex DNA by translocating in the 3'-5' direction.. The catalysed reaction is ATP + H2O = ADP + phosphate + H(+). In terms of biological role, ATP-dependent DNA 3'-5' helicase required for initiation of viral DNA replication. It forms a complex with the viral E2 protein. The E1-E2 complex binds to the replication origin which contains binding sites for both proteins. During the initial step, a dimer of E1 interacts with a dimer of protein E2 leading to a complex that binds the viral origin of replication with high specificity. Then, a second dimer of E1 displaces the E2 dimer in an ATP-dependent manner to form the E1 tetramer. Following this, two E1 monomers are added to each half of the site, which results in the formation of two E1 trimers on the viral ori. Subsequently, two hexamers will be created. The double hexamer acts as a bi-directional helicase machinery and unwinds the viral DNA and then recruits the host DNA polymerase to start replication. In Sylvilagus floridanus (Cottontail rabbit), this protein is Replication protein E1.